The sequence spans 482 residues: MNMATFLRGFEEKGLKNDRPGDQFSKEKKKILFSFCEVCNIQLNSAAQAQVHYDGKSHRKRVKQLSDGQPPPPVQGSVPLLAGPCPCPGPGPNTSTGSACHTTTLPALVRTPTLMMQPSLDIKPFMSFPVDSSSAVGLFPNFNTMDPVQKAVINHTFGVSIPPKKKQVISCNVCQLRFNSDSQAEAHYKGSKHAKKVKALEATKNKPKMVPSKDSAKANPSCSIRPGTGDSSDKSEDKGKIKATSSSQPSGSEGGSFLLKSGTTPLPLGAIASPSKSTNGAPGSVAESEEEKAKKLLYCSLCKVAVNSLSQLEAHNTGSKHKTMVEARNGAGPIKSYPRPGSRLKVQNGSKGSGLQNKMFHCEICDVHVNSEIQLKQHISSRRHKDRVAGKPLKPKYSPYNKLQRSPSILAAKLAFQKDLMKPLAPTFLSSPLAAAAVSSALSLPPRPSASLFQAAAIPPALLRPGHGPIRATPASILFAPY.

Residues 1 to 105 (MNMATFLRGF…TGSACHTTTL (105 aa)) form a required for induction of apoptosis region. 2 consecutive Matrin-type zinc fingers follow at residues 34-64 (SFCE…RVKQ) and 169-199 (ISCN…KVKA). Disordered regions lie at residues 54–75 (DGKS…PPVQ), 189–259 (KGSK…SFLL), and 268–287 (LGAI…SVAE). Residues 106 to 482 (PALVRTPTLM…TPASILFAPY (377 aa)) form an interaction with p53/TP53 region. Over residues 231 to 240 (SSDKSEDKGK) the composition is skewed to basic and acidic residues. The segment at 294 to 328 (KKLLYCSLCKVAVNSLSQLEAHNTGSKHKTMVEAR) adopts a Matrin-type 3 zinc-finger fold. Disordered regions lie at residues 331-352 (AGPI…GSKG) and 378-397 (HISS…KPKY). The Matrin-type 4 zinc-finger motif lies at 360–390 (FHCEICDVHVNSEIQLKQHISSRRHKDRVAG).

As to quaternary structure, interacts with p53/TP53; the interaction is direct.

It is found in the nucleus. In terms of biological role, may play a role in p53/TP53-mediated apoptosis. In Mus musculus (Mouse), this protein is Zinc finger protein 385B (Znf385b).